Reading from the N-terminus, the 292-residue chain is Protein CHLOROPLAST ENHANCING STRESS TOLERANCE, chloroplastic (292 aa).

A compositionally biased stretch (pro residues) spans 1–15; it reads MALLSPPSPPPPLPP. The N-terminal 67 residues, 1–67, are a transit peptide targeting the chloroplast; it reads MALLSPPSPP…RSSRRRRRVA (67 aa). Disordered stretches follow at residues 1 to 119 and 206 to 225; these read MALL…DLED and MEAP…KATD. 2 stretches are compositionally biased toward low complexity: residues 49–58 and 94–107; these read STANARAYSR and ASSD…ASSA. Residues 267–287 form a helical membrane-spanning segment; sequence ALYLLTAFPVIIGISVVLILF.

Belongs to the Y3IP1/CEST family.

The protein resides in the plastid. It localises to the chloroplast thylakoid membrane. In terms of biological role, involved in light-induced chloroplast development and growth. Involved in the plant response to abiotic and photooxidative stresses. May be involved in the suppression of photooxidative damage. This chain is Protein CHLOROPLAST ENHANCING STRESS TOLERANCE, chloroplastic, found in Oryza sativa subsp. indica (Rice).